Here is a 283-residue protein sequence, read N- to C-terminus: Glutamate racemase (283 aa).

Substrate is bound by residues 28-29 (DS) and 60-61 (YG). The active-site Proton donor/acceptor is cysteine 92. Substrate is bound at residue 93 to 94 (NT). The active-site Proton donor/acceptor is the cysteine 204. 205-206 (TH) contributes to the substrate binding site.

The protein belongs to the aspartate/glutamate racemases family.

The catalysed reaction is L-glutamate = D-glutamate. The protein operates within cell wall biogenesis; peptidoglycan biosynthesis. Its function is as follows. Provides the (R)-glutamate required for cell wall biosynthesis. In Salmonella gallinarum (strain 287/91 / NCTC 13346), this protein is Glutamate racemase.